Consider the following 201-residue polypeptide: Large ribosomal subunit protein uL4 (201 aa).

Residues 45–66 (AQKSRAEVVGSNKKPWRQKGTG) form a disordered region.

It belongs to the universal ribosomal protein uL4 family. As to quaternary structure, part of the 50S ribosomal subunit.

Its function is as follows. One of the primary rRNA binding proteins, this protein initially binds near the 5'-end of the 23S rRNA. It is important during the early stages of 50S assembly. It makes multiple contacts with different domains of the 23S rRNA in the assembled 50S subunit and ribosome. Forms part of the polypeptide exit tunnel. This chain is Large ribosomal subunit protein uL4, found in Baumannia cicadellinicola subsp. Homalodisca coagulata.